A 469-amino-acid polypeptide reads, in one-letter code: Glutamate--tRNA ligase (469 aa).

The 'HIGH' region signature appears at 9–19; that stretch reads PSPTGFLHVGG. Positions 98, 100, 125, and 127 each coordinate Zn(2+). The 'KMSKS' region signature appears at 236–240; it reads KLSKR. An ATP-binding site is contributed by lysine 239.

This sequence belongs to the class-I aminoacyl-tRNA synthetase family. Glutamate--tRNA ligase type 1 subfamily. As to quaternary structure, monomer. The cofactor is Zn(2+).

It is found in the cytoplasm. The catalysed reaction is tRNA(Glu) + L-glutamate + ATP = L-glutamyl-tRNA(Glu) + AMP + diphosphate. In terms of biological role, catalyzes the attachment of glutamate to tRNA(Glu) in a two-step reaction: glutamate is first activated by ATP to form Glu-AMP and then transferred to the acceptor end of tRNA(Glu). This is Glutamate--tRNA ligase from Shewanella baltica (strain OS185).